A 486-amino-acid chain; its full sequence is Mitogen-activated protein kinase 17 (486 aa).

The Protein kinase domain maps to 16–307 (YQIQEVVGKG…AEEALADPYF (292 aa)). ATP-binding positions include 22–30 (VGKGSYGVV) and Lys-45. Asp-142 functions as the Proton acceptor in the catalytic mechanism. Thr-178 carries the post-translational modification Phosphothreonine. A TXY motif is present at residues 178-180 (TDY). Tyr-180 carries the post-translational modification Phosphotyrosine. The residue at position 183 (Thr-183) is a Phosphothreonine. The segment at 386 to 455 (EEHNDDEEEH…LSSQKASQVD (70 aa)) is disordered. The span at 422 to 433 (SVHAQSSSASVV) shows a compositional bias: low complexity. The segment covering 440–452 (PNTATGLSSQKAS) has biased composition (polar residues).

This sequence belongs to the protein kinase superfamily. CMGC Ser/Thr protein kinase family. MAP kinase subfamily. Post-translationally, dually phosphorylated on Thr-178 and Tyr-180, which activates the enzyme.

It carries out the reaction L-seryl-[protein] + ATP = O-phospho-L-seryl-[protein] + ADP + H(+). It catalyses the reaction L-threonyl-[protein] + ATP = O-phospho-L-threonyl-[protein] + ADP + H(+). Activated by threonine and tyrosine phosphorylation. The chain is Mitogen-activated protein kinase 17 (MPK17) from Arabidopsis thaliana (Mouse-ear cress).